A 409-amino-acid polypeptide reads, in one-letter code: Torsin-4A (409 aa).

The segment covering 1 to 16 (MGEQDPSDRLRGDQLK) has biased composition (basic and acidic residues). Disordered stretches follow at residues 1-28 (MGEQ…SFSQ) and 75-99 (DNLH…KGRV). Residues 17–28 (EPNQNGKGSFSQ) are compositionally biased toward polar residues. Basic residues predominate over residues 88–98 (PRKRKKKRKGR). Residues 120-136 (CLYLLCIIVFLQVYNAI) form a helical membrane-spanning segment. 192-199 (GPTGVGKS) contributes to the ATP binding site.

The protein belongs to the ClpA/ClpB family. Torsin subfamily.

The protein resides in the membrane. The polypeptide is Torsin-4A (tor4a) (Danio rerio (Zebrafish)).